A 237-amino-acid chain; its full sequence is MDIKLKDFEGPLDLLLHLVSKYEVDIYDVPIVEVIEQYLAYLATLQAMKLEVAGEYMLMASQLMLIKSRKLLPTVVEDEPEADDPELELLSQLEEYAHFKAASQVLAKKHEVRAQYFSKPKVELVYEDVTLNQDKTIQDIFLAFSKIMAEKQEEIRRRHTTIARDDYKIEDMMLIIEEAFSAKNKLFLDELFSDAKDMNQVITLFLATLELIKIHRISVQQETIFGTITLRKEWTNE.

Belongs to the ScpA family. As to quaternary structure, component of a cohesin-like complex composed of ScpA, ScpB and the Smc homodimer, in which ScpA and ScpB bind to the head domain of Smc. The presence of the three proteins is required for the association of the complex with DNA.

It is found in the cytoplasm. Functionally, participates in chromosomal partition during cell division. May act via the formation of a condensin-like complex containing Smc and ScpB that pull DNA away from mid-cell into both cell halves. This is Segregation and condensation protein A from Streptococcus thermophilus (strain ATCC BAA-250 / LMG 18311).